The chain runs to 521 residues: 3,4-dihydroxyphenylacetaldehyde synthase (521 aa).

Residue K306 is modified to N6-(pyridoxal phosphate)lysine.

It belongs to the group II decarboxylase family. The cofactor is pyridoxal 5'-phosphate. As to expression, highly expressed in the cuticle and midgut. Low expression in the head and thorax.

The enzyme catalyses L-dopa + O2 + H2O + H(+) = 3,4-dihydroxyphenylacetaldehyde + H2O2 + NH4(+) + CO2. Catalyzes the decarboxylation-oxidative deamination of L-3,4-dihydroxyphenylalanine (L-DOPA) to 3,4-dihydroxylphenylacetaldehyde (DHPAA). Involved in cuticle development. Probably responsible for the protein cross-linking during the development of flexible cuticles. The chain is 3,4-dihydroxyphenylacetaldehyde synthase from Aedes aegypti (Yellowfever mosquito).